Reading from the N-terminus, the 275-residue chain is Shikimate dehydrogenase (NADP(+)) (275 aa).

Residues 15–17 (SKS) and T62 contribute to the shikimate site. K66 (proton acceptor) is an active-site residue. E78 contributes to the NADP(+) binding site. Shikimate contacts are provided by N87 and D102. Residues 127 to 131 (GAGGA), 151 to 156 (NRTPQK), and M215 contribute to the NADP(+) site. Residue Y217 participates in shikimate binding. Position 239 (G239) interacts with NADP(+).

This sequence belongs to the shikimate dehydrogenase family. As to quaternary structure, homodimer.

The catalysed reaction is shikimate + NADP(+) = 3-dehydroshikimate + NADPH + H(+). The protein operates within metabolic intermediate biosynthesis; chorismate biosynthesis; chorismate from D-erythrose 4-phosphate and phosphoenolpyruvate: step 4/7. Involved in the biosynthesis of the chorismate, which leads to the biosynthesis of aromatic amino acids. Catalyzes the reversible NADPH linked reduction of 3-dehydroshikimate (DHSA) to yield shikimate (SA). This chain is Shikimate dehydrogenase (NADP(+)), found in Nitrosospira multiformis (strain ATCC 25196 / NCIMB 11849 / C 71).